Here is a 436-residue protein sequence, read N- to C-terminus: tRNA-2-methylthio-N(6)-dimethylallyladenosine synthase (436 aa).

An MTTase N-terminal domain is found at 5 to 121; that stretch reads RKLFIKTYGC…LPDMLERTEG (117 aa). [4Fe-4S] cluster contacts are provided by C14, C50, C84, C158, C162, and C165. Residues 144–374 enclose the Radical SAM core domain; it reads ATRGPAAFLT…TEQQRAAQMA (231 aa). Residues 373-435 enclose the TRAM domain; sequence MAMVGREVGV…PNSLAGERLG (63 aa).

The protein belongs to the methylthiotransferase family. MiaB subfamily. In terms of assembly, monomer. [4Fe-4S] cluster serves as cofactor.

It localises to the cytoplasm. The catalysed reaction is N(6)-dimethylallyladenosine(37) in tRNA + (sulfur carrier)-SH + AH2 + 2 S-adenosyl-L-methionine = 2-methylsulfanyl-N(6)-dimethylallyladenosine(37) in tRNA + (sulfur carrier)-H + 5'-deoxyadenosine + L-methionine + A + S-adenosyl-L-homocysteine + 2 H(+). In terms of biological role, catalyzes the methylthiolation of N6-(dimethylallyl)adenosine (i(6)A), leading to the formation of 2-methylthio-N6-(dimethylallyl)adenosine (ms(2)i(6)A) at position 37 in tRNAs that read codons beginning with uridine. This Cereibacter sphaeroides (strain ATCC 17023 / DSM 158 / JCM 6121 / CCUG 31486 / LMG 2827 / NBRC 12203 / NCIMB 8253 / ATH 2.4.1.) (Rhodobacter sphaeroides) protein is tRNA-2-methylthio-N(6)-dimethylallyladenosine synthase.